A 100-amino-acid chain; its full sequence is Elevenin (100 aa).

The signal sequence occupies residues 1–24 (MALSQKALLVLVLSMLLTASDSWA). A disulfide bond links C29 and C38. Residues 44–100 (KRGGDSLSVGGSAELDDTLTDPFLKSEEPKEWRELTRLSRVLQTFLSHPTGEMEQHD) constitute a propeptide that is removed on maturation.

This sequence belongs to the elevenin family. Monomer. Expressed by the venom duct.

The protein localises to the secreted. May mimic the function of prey elevenin neuropeptide. In vivo, intracranial injection in mice induces hyperactivity. This Conus ammiralis (Admiral cone) protein is Elevenin.